The chain runs to 66 residues: Beta-toxin Chui4 (66 aa).

Residues 1–66 (KEGYLVELGT…VWPLKNKTCK (66 aa)) form the LCN-type CS-alpha/beta domain. Cystine bridges form between Cys12/Cys65, Cys16/Cys41, Cys25/Cys46, and Cys29/Cys48.

This sequence belongs to the long (4 C-C) scorpion toxin superfamily. Sodium channel inhibitor family. Beta subfamily. Expressed by the venom gland.

It is found in the secreted. Functionally, beta toxins bind voltage-independently at site-4 of sodium channels (Nav) and shift the voltage of activation toward more negative potentials thereby affecting sodium channel activation and promoting spontaneous and repetitive firing. Acts on human sodium channel Nav1.6/SCN8A. Also able to weakly shift the activation curves of human Nav1.2/SCN2A and Nav1.4/SCN4A. This is Beta-toxin Chui4 from Centruroides huichol (Scorpion).